Here is a 297-residue protein sequence, read N- to C-terminus: Cell division protein ZipA (297 aa).

Met1 is a topological domain (periplasmic). A helical transmembrane segment spans residues Glu2 to Phe22. The Cytoplasmic portion of the chain corresponds to Asp23 to Arg297. Residues Asp48–Lys150 are disordered. Residues Ala83–Pro92 are compositionally biased toward basic and acidic residues. Over residues Leu124 to Ala133 the composition is skewed to acidic residues. A compositionally biased stretch (polar residues) spans Asn136–Val149.

This sequence belongs to the ZipA family. As to quaternary structure, interacts with FtsZ via their C-terminal domains.

It is found in the cell inner membrane. Its function is as follows. Essential cell division protein that stabilizes the FtsZ protofilaments by cross-linking them and that serves as a cytoplasmic membrane anchor for the Z ring. Also required for the recruitment to the septal ring of downstream cell division proteins. The protein is Cell division protein ZipA of Pseudomonas putida (strain ATCC 700007 / DSM 6899 / JCM 31910 / BCRC 17059 / LMG 24140 / F1).